Consider the following 453-residue polypeptide: Putative sodium-coupled neutral amino acid transporter 11 (453 aa).

The span at 1 to 10 shows a compositional bias: polar residues; the sequence is MSYQQPQLSG. Residues 1–34 form a disordered region; it reads MSYQQPQLSGPLQRETDSSDRESLISGHEHGGKS. The segment covering 14 to 32 has biased composition (basic and acidic residues); sequence RETDSSDRESLISGHEHGG. 11 consecutive transmembrane segments (helical) span residues 39–59, 66–86, 106–126, 150–170, 179–199, 222–242, 262–282, 299–319, 337–357, 359–379, and 398–418; these read AVFN…PYSM, LGIL…VLLI, GFPG…IAMI, GWFI…TLPL, LGKI…IVMT, AIQA…CFLV, ILVS…TFTG, VTFG…IECF, VFHT…SLMI, CLGI…IFII, and IMAC…FVMA. 2 N-linked (GlcNAc...) asparagine glycosylation sites follow: Asn438 and Asn443.

It belongs to the amino acid/polyamine transporter 2 family.

The protein localises to the membrane. Functionally, putative sodium-dependent amino acid/proton antiporter. This chain is Putative sodium-coupled neutral amino acid transporter 11 (Slc38a11), found in Mus musculus (Mouse).